The chain runs to 428 residues: Tol-Pal system protein TolB (428 aa).

Residues 1-24 form the signal peptide; sequence MPSLKTLLRGVLVAAMLVAGSARA.

It belongs to the TolB family. As to quaternary structure, the Tol-Pal system is composed of five core proteins: the inner membrane proteins TolA, TolQ and TolR, the periplasmic protein TolB and the outer membrane protein Pal. They form a network linking the inner and outer membranes and the peptidoglycan layer.

The protein resides in the periplasm. Its function is as follows. Part of the Tol-Pal system, which plays a role in outer membrane invagination during cell division and is important for maintaining outer membrane integrity. This is Tol-Pal system protein TolB from Chromobacterium violaceum (strain ATCC 12472 / DSM 30191 / JCM 1249 / CCUG 213 / NBRC 12614 / NCIMB 9131 / NCTC 9757 / MK).